The sequence spans 196 residues: Probable peptidyl-prolyl cis-trans isomerase (196 aa).

The N-terminal stretch at 1–26 is a signal peptide; sequence MSFIRSALAAAAFVALSIGAVQTASA. A PPIase cyclophilin-type domain is found at 29-194; that stretch reads PENTVILKLK…KIIKATIEAD (166 aa).

Belongs to the cyclophilin-type PPIase family.

Its subcellular location is the periplasm. The catalysed reaction is [protein]-peptidylproline (omega=180) = [protein]-peptidylproline (omega=0). Functionally, PPIases accelerate the folding of proteins. It catalyzes the cis-trans isomerization of proline imidic peptide bonds in oligopeptides. The polypeptide is Probable peptidyl-prolyl cis-trans isomerase (ppi) (Brucella abortus (strain 2308)).